We begin with the raw amino-acid sequence, 334 residues long: CRISPR-associated protein Cas1 3 (334 aa).

Mn(2+) is bound by residues glutamate 165, histidine 230, and glutamate 245.

It belongs to the CRISPR-associated endonuclease Cas1 family. Homodimer, forms a heterotetramer with a Cas2 homodimer. The cofactor is Mg(2+). Mn(2+) serves as cofactor.

Functionally, CRISPR (clustered regularly interspaced short palindromic repeat), is an adaptive immune system that provides protection against mobile genetic elements (viruses, transposable elements and conjugative plasmids). CRISPR clusters contain spacers, sequences complementary to antecedent mobile elements, and target invading nucleic acids. CRISPR clusters are transcribed and processed into CRISPR RNA (crRNA). Acts as a dsDNA endonuclease. Involved in the integration of spacer DNA into the CRISPR cassette. In Methanobrevibacter ruminantium (strain ATCC 35063 / DSM 1093 / JCM 13430 / OCM 146 / M1) (Methanobacterium ruminantium), this protein is CRISPR-associated protein Cas1 3.